A 331-amino-acid polypeptide reads, in one-letter code: Phenylalanine--tRNA ligase alpha subunit (331 aa).

Residue Glu-254 participates in Mg(2+) binding.

Belongs to the class-II aminoacyl-tRNA synthetase family. Phe-tRNA synthetase alpha subunit type 1 subfamily. Tetramer of two alpha and two beta subunits. Mg(2+) serves as cofactor.

It is found in the cytoplasm. It catalyses the reaction tRNA(Phe) + L-phenylalanine + ATP = L-phenylalanyl-tRNA(Phe) + AMP + diphosphate + H(+). This chain is Phenylalanine--tRNA ligase alpha subunit, found in Blochmanniella pennsylvanica (strain BPEN).